A 445-amino-acid polypeptide reads, in one-letter code: tRNA modification GTPase MnmE (445 aa).

Residues R20, E79, and K119 each coordinate (6S)-5-formyl-5,6,7,8-tetrahydrofolate. Residues G215 to E371 form the TrmE-type G domain. Residue N225 coordinates K(+). Residues N225–S230, S244–T250, and D269–G272 contribute to the GTP site. S229 contacts Mg(2+). Positions 244, 246, and 249 each coordinate K(+). T250 contacts Mg(2+). Position 445 (K445) interacts with (6S)-5-formyl-5,6,7,8-tetrahydrofolate.

It belongs to the TRAFAC class TrmE-Era-EngA-EngB-Septin-like GTPase superfamily. TrmE GTPase family. Homodimer. Heterotetramer of two MnmE and two MnmG subunits. The cofactor is K(+).

It localises to the cytoplasm. Its function is as follows. Exhibits a very high intrinsic GTPase hydrolysis rate. Involved in the addition of a carboxymethylaminomethyl (cmnm) group at the wobble position (U34) of certain tRNAs, forming tRNA-cmnm(5)s(2)U34. This Rickettsia typhi (strain ATCC VR-144 / Wilmington) protein is tRNA modification GTPase MnmE.